The following is a 194-amino-acid chain: MEKLQQRVKEDGVVIDGGILKVDSFLNHQIDPELMYEVGETIYNKYKDEGITKVLTIEASGIAPAIMTALKFKVPCLFAKKSVPSTLTEEVYHTDIHSYTKNKTSHVVVSKRFLSENDRVVIIDDFLANGEAALGLYNLVQQAGATCVGVGIVVEKSFQSGKQRLLDAGLDVTSLCEIAALDNGKVTLVGEGEL.

Residues L20 and N27 each contribute to the xanthine site. 128-132 provides a ligand contact to 5-phospho-alpha-D-ribose 1-diphosphate; it reads ANGEA. K156 is a binding site for xanthine.

Belongs to the purine/pyrimidine phosphoribosyltransferase family. Xpt subfamily. As to quaternary structure, homodimer.

It is found in the cytoplasm. It catalyses the reaction XMP + diphosphate = xanthine + 5-phospho-alpha-D-ribose 1-diphosphate. It functions in the pathway purine metabolism; XMP biosynthesis via salvage pathway; XMP from xanthine: step 1/1. Functionally, converts the preformed base xanthine, a product of nucleic acid breakdown, to xanthosine 5'-monophosphate (XMP), so it can be reused for RNA or DNA synthesis. This Macrococcus caseolyticus (strain JCSC5402) (Macrococcoides caseolyticum) protein is Xanthine phosphoribosyltransferase.